Reading from the N-terminus, the 460-residue chain is Muscarinic acetylcholine receptor M1 (460 aa).

The Extracellular segment spans residues 1-22 (MNTSVPPAVSPNITVLAPGKGP). N-linked (GlcNAc...) asparagine glycosylation is found at Asn-2 and Asn-12. Residues 23–48 (WQVAFIGITTGLLSLATVTGNLLVLI) traverse the membrane as a helical segment. Residues 49 to 62 (SFKVNTELKTVNNY) lie on the Cytoplasmic side of the membrane. Residues 63-84 (FLLSLACADLIIGTFSMNLYTT) form a helical membrane-spanning segment. Residues 85–95 (YLLMGHWALGT) lie on the Extracellular side of the membrane. The helical transmembrane segment at 96–121 (LACDLWLALDYVASNASVMNLLLISF) threads the bilayer. An intrachain disulfide couples Cys-98 to Cys-178. Over 122 to 142 (DRYFSVTRPLSYRAKRTPRRA) the chain is Cytoplasmic. The helical transmembrane segment at 143-164 (ALMIGLAWLVSFVLWAPAILFW) threads the bilayer. The Extracellular portion of the chain corresponds to 165–185 (QYLVGERTVLAGQCYIQFLSQ). A helical membrane pass occupies residues 186 to 209 (PIITFGTAMAAFYLPVTVMCTLYW). Residues 210-366 (RIYRETENRA…LVKEKKAART (157 aa)) lie on the Cytoplasmic side of the membrane. Disordered stretches follow at residues 225–257 (LQGS…SPPG), 274–297 (WKEE…EEPG), and 310–351 (EAQA…QLAK). Phosphothreonine is present on Thr-230. The segment covering 238–257 (SSSSERSQPGAEGSPESPPG) has biased composition (low complexity). A Phosphoserine modification is found at Ser-254. A compositionally biased stretch (basic residues) spans 328–343 (RPTKKGRDRGGKGQKP). A helical transmembrane segment spans residues 367–390 (LSAILLAFILTWTPYNIMVLVSTF). Over 391-397 (CKDCVPE) the chain is Extracellular. Residues 398-420 (TLWELGYWLCYVNSTVNPMCYAL) form a helical membrane-spanning segment. At 421 to 460 (CNKAFRDTFRLLLLCRWDKRRWRKIPKRPGSVHRTPSRQC) the chain is on the cytoplasmic side. Position 451 is a phosphoserine (Ser-451). Phosphothreonine is present on Thr-455. At Ser-457 the chain carries Phosphoserine.

It belongs to the G-protein coupled receptor 1 family. Muscarinic acetylcholine receptor subfamily. CHRM1 sub-subfamily. Interacts with GPRASP2. Interacts with TMEM147.

The protein resides in the cell membrane. It localises to the postsynaptic cell membrane. Its function is as follows. The muscarinic acetylcholine receptor mediates various cellular responses, including inhibition of adenylate cyclase, breakdown of phosphoinositides and modulation of potassium channels through the action of G proteins. Primary transducing effect is Pi turnover. This Mus musculus (Mouse) protein is Muscarinic acetylcholine receptor M1 (Chrm1).